The following is a 187-amino-acid chain: Ribosome maturation factor RimP (187 aa).

It belongs to the RimP family.

The protein localises to the cytoplasm. Functionally, required for maturation of 30S ribosomal subunits. The chain is Ribosome maturation factor RimP from Phenylobacterium zucineum (strain HLK1).